Consider the following 218-residue polypeptide: Large ribosomal subunit protein uL3 (218 aa).

Positions 127 to 167 are disordered; sequence GFSRGPMSHGSKNHREPGSTGAGTTPGRIYPGKRMAGRYGG.

Belongs to the universal ribosomal protein uL3 family. In terms of assembly, part of the 50S ribosomal subunit. Forms a cluster with proteins L14 and L19.

In terms of biological role, one of the primary rRNA binding proteins, it binds directly near the 3'-end of the 23S rRNA, where it nucleates assembly of the 50S subunit. The polypeptide is Large ribosomal subunit protein uL3 (Prochlorococcus marinus (strain MIT 9303)).